Here is a 400-residue protein sequence, read N- to C-terminus: Beta-ketoadipyl-CoA thiolase (400 aa).

Cys90 (acyl-thioester intermediate) is an active-site residue. Residues His356 and Cys386 each act as proton acceptor in the active site.

It belongs to the thiolase-like superfamily. Thiolase family.

It carries out the reaction succinyl-CoA + acetyl-CoA = 3-oxoadipyl-CoA + CoA. Its pathway is aromatic compound metabolism; beta-ketoadipate pathway; acetyl-CoA and succinyl-CoA from 3-oxoadipate: step 2/2. Functionally, catalyzes thiolytic cleavage of beta-ketoadipyl-CoA to succinyl-CoA and acetyl-CoA. The chain is Beta-ketoadipyl-CoA thiolase (pcaF) from Pseudomonas putida (Arthrobacter siderocapsulatus).